The following is a 373-amino-acid chain: Queuine tRNA-ribosyltransferase (373 aa).

Aspartate 93 serves as the catalytic Proton acceptor. Substrate contacts are provided by residues 93-97 (DSGGF), aspartate 147, glutamine 190, and glycine 219. The RNA binding stretch occupies residues 250–256 (GVGEPVD). Aspartate 269 serves as the catalytic Nucleophile. An RNA binding; important for wobble base 34 recognition region spans residues 274–278 (TRLAR). Cysteine 307, cysteine 309, cysteine 312, and histidine 338 together coordinate Zn(2+).

The protein belongs to the queuine tRNA-ribosyltransferase family. In terms of assembly, homodimer. Within each dimer, one monomer is responsible for RNA recognition and catalysis, while the other monomer binds to the replacement base PreQ1. Zn(2+) is required as a cofactor.

It catalyses the reaction 7-aminomethyl-7-carbaguanine + guanosine(34) in tRNA = 7-aminomethyl-7-carbaguanosine(34) in tRNA + guanine. The protein operates within tRNA modification; tRNA-queuosine biosynthesis. Catalyzes the base-exchange of a guanine (G) residue with the queuine precursor 7-aminomethyl-7-deazaguanine (PreQ1) at position 34 (anticodon wobble position) in tRNAs with GU(N) anticodons (tRNA-Asp, -Asn, -His and -Tyr). Catalysis occurs through a double-displacement mechanism. The nucleophile active site attacks the C1' of nucleotide 34 to detach the guanine base from the RNA, forming a covalent enzyme-RNA intermediate. The proton acceptor active site deprotonates the incoming PreQ1, allowing a nucleophilic attack on the C1' of the ribose to form the product. After dissociation, two additional enzymatic reactions on the tRNA convert PreQ1 to queuine (Q), resulting in the hypermodified nucleoside queuosine (7-(((4,5-cis-dihydroxy-2-cyclopenten-1-yl)amino)methyl)-7-deazaguanosine). The chain is Queuine tRNA-ribosyltransferase from Fusobacterium nucleatum subsp. nucleatum (strain ATCC 25586 / DSM 15643 / BCRC 10681 / CIP 101130 / JCM 8532 / KCTC 2640 / LMG 13131 / VPI 4355).